We begin with the raw amino-acid sequence, 144 residues long: MMIIIFIELCRIADSLLWIPKSSRRTSSTFYIPNIIALLKMESQQLSQNSPTLHIHTCGSKIGTLFLRFTKVAIGTSLIVGAGVAMEVSVPLPPQPLYSRSEVPSVELCGIVAICRSPPSVYPTCRPISLSKKIVSGLVRTNSS.

Residues 72–90 (VAIGTSLIVGAGVAMEVSV) traverse the membrane as a helical segment.

To yeast YCL21w.

Its subcellular location is the membrane. This is an uncharacterized protein from Saccharomyces cerevisiae (strain ATCC 204508 / S288c) (Baker's yeast).